We begin with the raw amino-acid sequence, 247 residues long: Protein NipSnap homolog 3B (247 aa).

N6-succinyllysine is present on residues Lys-45 and Lys-57.

This sequence belongs to the NipSnap family.

The sequence is that of Protein NipSnap homolog 3B (NIPSNAP3B) from Homo sapiens (Human).